The sequence spans 398 residues: Serpin-Z2B (398 aa).

Positions 343–367 (GTEAAATTIAKVVLRQAPPPSVLDF) are RCL.

This sequence belongs to the serpin family.

Functionally, inhibits chymotrypsin, cathepsin G and trypsin in vitro. The chain is Serpin-Z2B from Triticum aestivum (Wheat).